The sequence spans 276 residues: UPF0328 protein ECU08_2080 (276 aa).

The disordered stretch occupies residues 1–24 (MGIIDVQRSHLTATPSKERDAPAH).

This sequence belongs to the UPF0328 family.

The sequence is that of UPF0328 protein ECU08_2080 from Encephalitozoon cuniculi (strain GB-M1) (Microsporidian parasite).